A 402-amino-acid chain; its full sequence is uncharacterized protein (402 aa).

A disordered region spans residues 332–402; it reads MFSSSSSSSE…PEPPPGKPGR (71 aa). Residues 370–379 show a composition bias toward polar residues; that stretch reads SETTSLQQYS. Residues 393-402 show a composition bias toward pro residues; it reads PEPPPGKPGR.

This is an uncharacterized protein from Mus musculus (Mouse).